The sequence spans 181 residues: ATP synthase subunit delta (181 aa).

This sequence belongs to the ATPase delta chain family. F-type ATPases have 2 components, F(1) - the catalytic core - and F(0) - the membrane proton channel. F(1) has five subunits: alpha(3), beta(3), gamma(1), delta(1), epsilon(1). F(0) has three main subunits: a(1), b(2) and c(10-14). The alpha and beta chains form an alternating ring which encloses part of the gamma chain. F(1) is attached to F(0) by a central stalk formed by the gamma and epsilon chains, while a peripheral stalk is formed by the delta and b chains.

The protein resides in the cell inner membrane. F(1)F(0) ATP synthase produces ATP from ADP in the presence of a proton or sodium gradient. F-type ATPases consist of two structural domains, F(1) containing the extramembraneous catalytic core and F(0) containing the membrane proton channel, linked together by a central stalk and a peripheral stalk. During catalysis, ATP synthesis in the catalytic domain of F(1) is coupled via a rotary mechanism of the central stalk subunits to proton translocation. Its function is as follows. This protein is part of the stalk that links CF(0) to CF(1). It either transmits conformational changes from CF(0) to CF(1) or is implicated in proton conduction. This Cupriavidus taiwanensis (strain DSM 17343 / BCRC 17206 / CCUG 44338 / CIP 107171 / LMG 19424 / R1) (Ralstonia taiwanensis (strain LMG 19424)) protein is ATP synthase subunit delta.